Here is a 134-residue protein sequence, read N- to C-terminus: Small ribosomal subunit protein uS8 (134 aa).

The protein belongs to the universal ribosomal protein uS8 family. As to quaternary structure, part of the 30S ribosomal subunit. Contacts proteins S5 and S12.

Its function is as follows. One of the primary rRNA binding proteins, it binds directly to 16S rRNA central domain where it helps coordinate assembly of the platform of the 30S subunit. This chain is Small ribosomal subunit protein uS8, found in Thermosipho africanus (strain TCF52B).